The following is a 385-amino-acid chain: MFLGALWLLLLLPLRPPGAQGQEADEPTPWPSVKGLKEQLRKAGALSKRYWELFSCTLWPDHCEDQETPVPPLGWSLPLWGRRSLDVLTAWLCRFQDCCSGGGDCRISNNLTGLESDLRVRLHGQHLASKLVLRAVKGYLEMPQVGKALALSFHGWSGTGKNFLARILMDNLYRDGMRSDCVKMFISTFHFPHPKYVDTYKEELQRQMQETQWRCHQSTFVFDEAEKLHPGLLELLEPYLEPRSPEARGVEAPRAIFLFLSNLGGSVINEVVLSLLKAGWSREEITTQHLEVPLQAEIMEAADSSFGSSGLLKKHLIDHFIPFLPLEYCHVRLCVRDAFLGQDLPYTEETLDEIAKMMTYVPEEERLFSSQGCKSISQRINLFLP.

An N-terminal signal peptide occupies residues 1-21; that stretch reads MFLGALWLLLLLPLRPPGAQG. An N-linked (GlcNAc...) asparagine glycan is attached at Asn110. An ATP-binding site is contributed by 155–162; sequence GWSGTGKN.

Belongs to the ClpA/ClpB family. Torsin subfamily. In terms of assembly, interacts with TOR1AIP1. N-glycosylated.

It localises to the cytoplasm. The protein resides in the endoplasmic reticulum lumen. This Mus musculus (Mouse) protein is Torsin-3A (Tor3a).